The following is a 277-amino-acid chain: Large ribosomal subunit protein uL2 (277 aa).

Residues 219–277 are disordered; the sequence is RPQTRGSAMNPVDHPHGGGEGKKNSGRHPVTPWGKPTKGAKTRRKKASDKLIISRRKGK. Residues 231–241 show a composition bias toward basic and acidic residues; the sequence is DHPHGGGEGKK. The segment covering 256-277 has biased composition (basic residues); the sequence is KGAKTRRKKASDKLIISRRKGK.

Belongs to the universal ribosomal protein uL2 family. In terms of assembly, part of the 50S ribosomal subunit. Forms a bridge to the 30S subunit in the 70S ribosome.

One of the primary rRNA binding proteins. Required for association of the 30S and 50S subunits to form the 70S ribosome, for tRNA binding and peptide bond formation. It has been suggested to have peptidyltransferase activity; this is somewhat controversial. Makes several contacts with the 16S rRNA in the 70S ribosome. The sequence is that of Large ribosomal subunit protein uL2 from Campylobacter curvus (strain 525.92).